The following is a 398-amino-acid chain: MLNSLDLAGRPQDTRVVVAMSGGVDSSATAALLKSQGYDVVGITLQLYDHGAATHRKGACCAGQDIHDARDVAERIGIPHYVLDYESRFRESVIDSFADSYALGETPVPCIECNRSVKFRDLLATARELGASALATGHYVSSRRLADGSRALICAADRDRDQSYFLFATTREQLDFLRFPLGDMTKPQTRDLARQFGLSVADKHDSQDICFVPTGRYTDVVERLKPNAMEPGEIVDLNGRVLGSHPGIVHFTVGQRRGLGIASRAPLYVLRLDAARRRVVVGPREALRMERIVLRDVNWIGDGALDRAVGDGLELFVRVRSTRAPQPAWLRAVKGGYEVELVAGEEGVSPGQACVFYDAAEGQARVLGGGFIKSAAPRSIAEPAHDDAASPALAAMRG.

ATP contacts are provided by residues 19 to 26 (AMSGGVDS) and Leu45. The Nucleophile role is filled by Cys113. Cys113 and Cys210 are oxidised to a cystine. Gly137 serves as a coordination point for ATP. The segment at 160–162 (RDQ) is interaction with tRNA. The active-site Cysteine persulfide intermediate is the Cys210.

Belongs to the MnmA/TRMU family.

Its subcellular location is the cytoplasm. The catalysed reaction is S-sulfanyl-L-cysteinyl-[protein] + uridine(34) in tRNA + AH2 + ATP = 2-thiouridine(34) in tRNA + L-cysteinyl-[protein] + A + AMP + diphosphate + H(+). Functionally, catalyzes the 2-thiolation of uridine at the wobble position (U34) of tRNA, leading to the formation of s(2)U34. In Rhodopseudomonas palustris (strain HaA2), this protein is tRNA-specific 2-thiouridylase MnmA.